The following is a 616-amino-acid chain: MDRAVSQVALENDEREAKNTWRLVFRIAILLLTVVTLAISAAALAYSMEASTPSDLIGIPTAISRAEEKITSALGSNQDVVDRIYKQVALESPLALLNTESTIMNAITSLSYQINGAANSSGCGAPIHDPDYIGGIGKELIVDDASDVTSFYPSAFQEHLNFIPAPTTGSGCTRIPSFDMSATHYCYTHNVILSGCRDHSHSHQYLALGVLRTSATGRVFFSTLHSINLDDTQNRKSCSVSATPLGCDMLCSKVTETEEEDYNSAVPTSMVHGRLGFDGQYHEKDLDVTTLFEDWVANYPGVGGGSFIDNRVWFPVYGGLKPNSPSDTAQEGKYVIYKRYNDTCPDEQDYQIRMAKSSYKPGRFGGKRVQQAILSIKVSTSLGEDPVLTVPPNTVTLMGAEGRVLTVGTSHFLYQRGSSYFSPALLYPMTVSNKTATLHSPYTFDAFTRPGSVPCQASARCPNSCVTGVYTDPYPLVFYRNHTLRGVFGTMLDDKQARLNPVSAVFDSISRSRITRVSSSSTKAAYTTSTCFKVVKTNKTYCLSIAEISNTLFGEFRIVPLLVEILKDDGVREARAGRLSQLREGWKDDIVSPIFCDAKNQTEYRRELESYAASWP.

Residues 1-26 are Intravirion-facing; the sequence is MDRAVSQVALENDEREAKNTWRLVFR. Residues 27–47 traverse the membrane as a helical segment; sequence IAILLLTVVTLAISAAALAYS. Residues 48–616 are Virion surface-facing; that stretch reads MEASTPSDLI…ELESYAASWP (569 aa). N-linked (GlcNAc...) asparagine; by host glycosylation occurs at Asn119. The segment at 124–152 is important for interaction with fusion/F protein; it reads GAPIHDPDYIGGIGKELIVDDASDVTSFY. Disulfide bonds link Cys172–Cys196, Cys186–Cys247, and Cys238–Cys251. Positions 234–239 are involved in neuraminidase activity; it reads NRKSCS. 2 N-linked (GlcNAc...) asparagine; by host glycosylation sites follow: Asn341 and Asn433. Disulfide bonds link Cys344/Cys461 and Cys455/Cys465. Residues Asn481, Asn538, and Asn600 are each glycosylated (N-linked (GlcNAc...) asparagine; by host). Cysteines 531 and 542 form a disulfide.

It belongs to the paramyxoviruses hemagglutinin-neuraminidase family. As to quaternary structure, homotetramer; composed of disulfide-linked homodimers. Interacts with F protein trimer. Interacts with host CG-1B; this interaction inhibits viral adsorption and replication rather than internalization.

The protein resides in the virion membrane. It localises to the host cell membrane. It catalyses the reaction Hydrolysis of alpha-(2-&gt;3)-, alpha-(2-&gt;6)-, alpha-(2-&gt;8)- glycosidic linkages of terminal sialic acid residues in oligosaccharides, glycoproteins, glycolipids, colominic acid and synthetic substrates.. Its function is as follows. Mediates the viral entry into the host cell together with fusion/F protein. Attaches the virus to sialic acid-containing cell receptors and thereby initiates infection. Binding of HN protein to the receptor induces a conformational change that allows the F protein to trigger virion/cell membranes fusion. Functionally, neuraminidase activity ensures the efficient spread of the virus by dissociating the mature virions from the neuraminic acid containing glycoproteins. The chain is Hemagglutinin-neuraminidase (HN) from Newcastle disease virus (strain Chicken/Northern Ireland/Ulster/67) (NDV).